The chain runs to 874 residues: Probable inorganic carbon transporter subunit DabA (874 aa).

Residues Cys-398, Asp-400, His-580, and Cys-595 each contribute to the Zn(2+) site.

Belongs to the inorganic carbon transporter (TC 9.A.2) DabA family. In terms of assembly, forms a complex with DabB. Requires Zn(2+) as cofactor.

It localises to the cell membrane. In terms of biological role, part of an energy-coupled inorganic carbon pump. The chain is Probable inorganic carbon transporter subunit DabA from Bacillus cereus (strain ZK / E33L).